The following is a 128-amino-acid chain: Con-Ins F2c (128 aa).

An N-terminal signal peptide occupies residues 1 to 24; sequence MTTSSYFLLVALGLLLYVCRSSFG. Disulfide bonds link C29-C104, C41-C107, C53-C120, and C106-C111. The propeptide at 59–89 is c peptide; sequence LQGGTGKKRGRASLLRKRRAFLSMLKARAKR. E115 carries the 4-carboxyglutamate; partial modification. At S127 the chain carries Serine amide.

The protein belongs to the insulin family. Heterodimer of A and B chains; disulfide-linked. In terms of tissue distribution, expressed by the venom gland.

The protein localises to the secreted. This venom insulin facilitates prey capture by rapidly inducing hypoglycemic shock. Intraperitoneal injection of this peptide into zebrafish lowers blood glucose with the same potency than human insulin. In vivo, when applied to water, this peptide reduces overall locomotor activity of zebrafish larvae, observed as a significant decrease in the percentage of time spent swimming and movement frequency. This Conus floridulus (Cone snail) protein is Con-Ins F2c.